The following is a 208-amino-acid chain: CASP-like protein 2A1 (208 aa).

Topologically, residues 1 to 36 (MSKMAEQKAAAVDGLGGAGAADAAPAGEAAAARVRP) are cytoplasmic. A helical transmembrane segment spans residues 37–57 (VETLLRAAPLGLCVAAMTVML). Residues 58-78 (RDQQSNEYGTVAYSDLGGFKY) are Extracellular-facing. A helical membrane pass occupies residues 79-99 (LVYANGLCAAYSLVSAFYTAV). The Cytoplasmic segment spans residues 100–108 (PRPATVSRS). Residues 109 to 129 (WVVFLLDQVFTYLILAAGAAA) form a helical membrane-spanning segment. Residues 130–161 (AELLYLAYNGDKEVTWSEACGVFGSFCRQART) are Extracellular-facing. A helical transmembrane segment spans residues 162 to 182 (SVAITFGTVLCFILLSLISSY). Over 183–208 (RLFSAYEAPPSSALGSKGVEIAAYPR) the chain is Cytoplasmic.

This sequence belongs to the Casparian strip membrane proteins (CASP) family. In terms of assembly, homodimer and heterodimers.

The protein localises to the cell membrane. The polypeptide is CASP-like protein 2A1 (Sorghum bicolor (Sorghum)).